Here is a 655-residue protein sequence, read N- to C-terminus: MLFDLINSFLKNGINNSNNNNNNNNNKNNFYNSLEDDDYLLNNQTTKVSLYLYFFIFAFMFLVVDLIMLYYKHRENIESRETDLSLKLNKMLIDFENDNKIKSSPTTSTTTTTITPTTTSSSQLRQPSTPKTTTKTINSPPSTPKSPPPLPSLESKLLYKDDIKQQLSLNEAKSQIDSAKQLDESLKYNSCIKLYIDGIEKLMALFSSYNSKEYRDYIDFYLKRAEYLKNELKKGTNLKSITNFNNFSKEYQINYNNKILEQQQQQQQQSSSTYRNSLNLSSSKSNSTINNRHSISSLSSLNSTTATTTTPSNTSTITSPGNKYGLQKSLSSTTLSLKKSSNSTNFQQPSPPSMVIPDIKGIDKSMVTLIMNEIMDRKNPVKWDDVVGLDKVKQSLMESVILPNLRPDVFTGLRAPPKGLLLFGPPGNGKTMIAKAVAYESKVTFFSISSSSLTSKYVGDGEKLVRALFAVATHFQPSIIFIDEIDSLLTERSSNESEASRRLKTEILVQFDGARTNGDERVLVMGATNRPEDLDDAALRRLVKRIYVGLPELETRLQIIQHLLVGQRHSLTKQQINSLAEVTQGYSGFDLAALCKDAAYEPIRRLGIGIKDLELNEISLISFKDFANSLKQIRPSVTSQSLKSFEKWNQKFGTI.

Topologically, residues 1-58 (MLFDLINSFLKNGINNSNNNNNNNNNKNNFYNSLEDDDYLLNNQTTKVSLYLYFFIFA) are cytoplasmic. The helical intramembrane region spans 59–79 (FMFLVVDLIMLYYKHRENIES). Residues 80 to 655 (RETDLSLKLN…EKWNQKFGTI (576 aa)) lie on the Cytoplasmic side of the membrane. A compositionally biased stretch (low complexity) spans 102–140 (KSSPTTSTTTTTITPTTTSSSQLRQPSTPKTTTKTINSP). A disordered region spans residues 102–151 (KSSPTTSTTTTTITPTTTSSSQLRQPSTPKTTTKTINSPPSTPKSPPPLP). The span at 141–151 (PSTPKSPPPLP) shows a compositional bias: pro residues. The region spanning 169 to 232 (LNEAKSQIDS…KRAEYLKNEL (64 aa)) is the MIT domain. Residues 261-325 (EQQQQQQQQS…TITSPGNKYG (65 aa)) form a disordered region. Residues 262–320 (QQQQQQQQSSSTYRNSLNLSSSKSNSTINNRHSISSLSSLNSTTATTTTPSNTSTITSP) show a composition bias toward low complexity. 424 to 431 (GPPGNGKT) contributes to the ATP binding site.

The protein belongs to the AAA ATPase family. Spastin subfamily. In terms of assembly, homohexamer. The homohexamer is stabilized by ATP-binding. The homohexamer may adopt a ring conformation through which microtubules pass prior to being severed. Interacts with microtubules.

The protein localises to the membrane. Its subcellular location is the cytoplasm. It is found in the cytoskeleton. The protein resides in the microtubule organizing center. It localises to the centrosome. The enzyme catalyses n ATP + n H2O + a microtubule = n ADP + n phosphate + (n+1) alpha/beta tubulin heterodimers.. Its function is as follows. ATP-dependent microtubule severing protein. Microtubule severing may promote reorganization of cellular microtubule arrays and the release of microtubules from the microtubule organizing center following nucleation. The sequence is that of Spastin from Dictyostelium discoideum (Social amoeba).